Here is a 185-residue protein sequence, read N- to C-terminus: Threonylcarbamoyl-AMP synthase (185 aa).

In terms of domain architecture, YrdC-like spans 5 to 185 (ADRIADAVAA…DLQSGETLRR (181 aa)).

It belongs to the SUA5 family. TsaC subfamily.

It is found in the cytoplasm. It carries out the reaction L-threonine + hydrogencarbonate + ATP = L-threonylcarbamoyladenylate + diphosphate + H2O. Its function is as follows. Required for the formation of a threonylcarbamoyl group on adenosine at position 37 (t(6)A37) in tRNAs that read codons beginning with adenine. Catalyzes the conversion of L-threonine, HCO(3)(-)/CO(2) and ATP to give threonylcarbamoyl-AMP (TC-AMP) as the acyladenylate intermediate, with the release of diphosphate. The chain is Threonylcarbamoyl-AMP synthase from Chromohalobacter salexigens (strain ATCC BAA-138 / DSM 3043 / CIP 106854 / NCIMB 13768 / 1H11).